The sequence spans 490 residues: Sulfate adenylyltransferase (490 aa).

An N-terminal region spans residues 1–165 (MTKALLKDLN…LQAVTPIRHF (165 aa)). Residues 166 to 390 (DFVEYRYSPA…LRQSYPPKYS (225 aa)) are catalytic. A sulfate-binding site is contributed by Gln-193. Residues 193 to 196 (QTRN) and 287 to 290 (GRDH) contribute to the ATP site. Residues Thr-194, Arg-195, and Asn-196 contribute to the active site. Arg-195 serves as a coordination point for sulfate. Ala-291 provides a ligand contact to sulfate. Met-329 contributes to the ATP binding site. Position 356 is a phosphothreonine (Thr-356). Residues 391–490 (QGFVLAVPAT…LSQLSDEGYL (100 aa)) are required for oligomerization; adenylyl-sulfate kinase-like.

The protein belongs to the sulfate adenylyltransferase family. Homohexamer. Dimer of trimers.

The protein resides in the cytoplasm. It catalyses the reaction sulfate + ATP + H(+) = adenosine 5'-phosphosulfate + diphosphate. It functions in the pathway sulfur metabolism; hydrogen sulfide biosynthesis; sulfite from sulfate: step 1/3. Functionally, catalyzes the first intracellular reaction of sulfate assimilation, forming adenosine-5'-phosphosulfate (APS) from inorganic sulfate and ATP. Plays an important role in sulfate activation as a component of the biosynthesis pathway of sulfur-containing amino acids. The protein is Sulfate adenylyltransferase (sua1) of Schizosaccharomyces pombe (strain 972 / ATCC 24843) (Fission yeast).